A 199-amino-acid polypeptide reads, in one-letter code: Thymidine kinase (199 aa).

ATP contacts are provided by residues 15–22 (GSMFSGKS) and 88–91 (DEVQ). The Proton acceptor role is filled by glutamate 89. The Zn(2+) site is built by cysteine 145, cysteine 148, cysteine 183, and histidine 186.

Belongs to the thymidine kinase family. Homotetramer.

It localises to the cytoplasm. It carries out the reaction thymidine + ATP = dTMP + ADP + H(+). The chain is Thymidine kinase from Staphylococcus aureus (strain Mu50 / ATCC 700699).